The chain runs to 1543 residues: DNA-directed RNA polymerase subunit beta' (1543 aa).

Zn(2+) contacts are provided by Cys-60, Cys-62, Cys-75, and Cys-78. Residues Asp-627, Asp-629, and Asp-631 each coordinate Mg(2+). Positions 1017, 1097, 1104, and 1107 each coordinate Zn(2+). 2 disordered regions span residues 1466 to 1490 (PADR…APPR) and 1522 to 1543 (AEEG…EENV).

It belongs to the RNA polymerase beta' chain family. In terms of assembly, the RNAP catalytic core consists of 2 alpha, 1 beta, 1 beta' and 1 omega subunit. When a sigma factor is associated with the core the holoenzyme is formed, which can initiate transcription. Mg(2+) is required as a cofactor. Requires Zn(2+) as cofactor.

The enzyme catalyses RNA(n) + a ribonucleoside 5'-triphosphate = RNA(n+1) + diphosphate. Functionally, DNA-dependent RNA polymerase catalyzes the transcription of DNA into RNA using the four ribonucleoside triphosphates as substrates. This is DNA-directed RNA polymerase subunit beta' from Herpetosiphon aurantiacus (strain ATCC 23779 / DSM 785 / 114-95).